The sequence spans 252 residues: 2-succinyl-6-hydroxy-2,4-cyclohexadiene-1-carboxylate synthase (252 aa).

The protein belongs to the AB hydrolase superfamily. MenH family. Monomer.

It catalyses the reaction 5-enolpyruvoyl-6-hydroxy-2-succinyl-cyclohex-3-ene-1-carboxylate = (1R,6R)-6-hydroxy-2-succinyl-cyclohexa-2,4-diene-1-carboxylate + pyruvate. It functions in the pathway quinol/quinone metabolism; 1,4-dihydroxy-2-naphthoate biosynthesis; 1,4-dihydroxy-2-naphthoate from chorismate: step 3/7. Its pathway is quinol/quinone metabolism; menaquinone biosynthesis. In terms of biological role, catalyzes a proton abstraction reaction that results in 2,5-elimination of pyruvate from 2-succinyl-5-enolpyruvyl-6-hydroxy-3-cyclohexene-1-carboxylate (SEPHCHC) and the formation of 2-succinyl-6-hydroxy-2,4-cyclohexadiene-1-carboxylate (SHCHC). The polypeptide is 2-succinyl-6-hydroxy-2,4-cyclohexadiene-1-carboxylate synthase (Salmonella agona (strain SL483)).